Reading from the N-terminus, the 697-residue chain is Potassium-transporting ATPase ATP-binding subunit (697 aa).

A run of 4 helical transmembrane segments spans residues 55–75 (PIMF…FLPS), 82–102 (GWFN…ANFA), 245–265 (LTFI…YLGF), and 271–291 (VLVA…LSAI). Aspartate 324 functions as the 4-aspartylphosphate intermediate in the catalytic mechanism. Residues aspartate 361, glutamate 365, 393-400 (FKAETRMS), and lysine 412 each bind ATP. 2 residues coordinate Mg(2+): aspartate 535 and aspartate 539. A run of 3 helical transmembrane segments spans residues 605 to 625 (FAII…LNIM), 633 to 653 (AILS…PLAM), and 677 to 697 (GGVI…GLFI).

It belongs to the cation transport ATPase (P-type) (TC 3.A.3) family. Type IA subfamily. The system is composed of three essential subunits: KdpA, KdpB and KdpC.

Its subcellular location is the cell membrane. The catalysed reaction is K(+)(out) + ATP + H2O = K(+)(in) + ADP + phosphate + H(+). Its function is as follows. Part of the high-affinity ATP-driven potassium transport (or Kdp) system, which catalyzes the hydrolysis of ATP coupled with the electrogenic transport of potassium into the cytoplasm. This subunit is responsible for energy coupling to the transport system and for the release of the potassium ions to the cytoplasm. The protein is Potassium-transporting ATPase ATP-binding subunit of Bacillus cereus (strain AH187).